The chain runs to 146 residues: Cystatin-C (146 aa).

The signal sequence occupies residues 1–26; the sequence is MAGPLRAPLLLLAILAVALALSPAAG. Ser43 carries the post-translational modification Phosphoserine. The short motif at 81-85 is the Secondary area of contact element; the sequence is QIVAG. Intrachain disulfides connect Cys99/Cys109 and Cys123/Cys143.

This sequence belongs to the cystatin family.

It localises to the secreted. In terms of biological role, as an inhibitor of cysteine proteinases, this protein is thought to serve an important physiological role as a local regulator of this enzyme activity. This is Cystatin-C (CST3) from Saimiri sciureus (Common squirrel monkey).